Reading from the N-terminus, the 179-residue chain is ATP synthase subunit b (179 aa).

The helical transmembrane segment at 27 to 47 (TAITFLVMLVVLGKFAWGPIV) threads the bilayer.

The protein belongs to the ATPase B chain family. F-type ATPases have 2 components, F(1) - the catalytic core - and F(0) - the membrane proton channel. F(1) has five subunits: alpha(3), beta(3), gamma(1), delta(1), epsilon(1). F(0) has three main subunits: a(1), b(2) and c(10-14). The alpha and beta chains form an alternating ring which encloses part of the gamma chain. F(1) is attached to F(0) by a central stalk formed by the gamma and epsilon chains, while a peripheral stalk is formed by the delta and b chains.

The protein localises to the cell inner membrane. Functionally, f(1)F(0) ATP synthase produces ATP from ADP in the presence of a proton or sodium gradient. F-type ATPases consist of two structural domains, F(1) containing the extramembraneous catalytic core and F(0) containing the membrane proton channel, linked together by a central stalk and a peripheral stalk. During catalysis, ATP synthesis in the catalytic domain of F(1) is coupled via a rotary mechanism of the central stalk subunits to proton translocation. Component of the F(0) channel, it forms part of the peripheral stalk, linking F(1) to F(0). This is ATP synthase subunit b from Anaeromyxobacter sp. (strain K).